Here is an 870-residue protein sequence, read N- to C-terminus: Ubiquitin-protein ligase E3A (870 aa).

Ser-8 carries the phosphoserine modification. The segment at 42–81 (CGNEACTNEFCASCPTFLRMDNNAAAIKALELYKINAKLC) adopts a C4-type; atypical zinc-finger fold. The span at 171–180 (EELKSLQEKD) shows a compositional bias: basic and acidic residues. A disordered region spans residues 171-223 (EELKSLQEKDEDKDEDEKEKAACSAAAMEEDSEASSSRMGDSSQGDNNVQKLG). Residues 208–220 (RMGDSSQGDNNVQ) are compositionally biased toward polar residues. Ser-213 bears the Phosphoserine mark. Residues 542–870 (NPADLKKQLY…ITYAKGFGML (329 aa)) form the HECT domain. Tyr-654 carries the phosphotyrosine; by ABL1 modification. Cys-838 serves as the catalytic Glycyl thioester intermediate.

The active form is probably a homotrimer. Binds UBQLN1 and UBQLN2. Interacts with the 26S proteasome. Interacts with BPY2. Interacts with HIF1AN, MAPK6 and NEURL4; interaction with MAPK6 may be mediated by NEURL4. Interacts with the proteasomal subunit PSMD4. Interacts with BMAL1. Interacts with ARC. Interacts with ESR1 and WBP2. In terms of processing, phosphorylation at Tyr-654 by ABL1 impairs E3 ligase activity. Widely expressed. Most abundant in brain, heart and thymus.

The protein resides in the cytoplasm. It localises to the nucleus. It carries out the reaction S-ubiquitinyl-[E2 ubiquitin-conjugating enzyme]-L-cysteine + [acceptor protein]-L-lysine = [E2 ubiquitin-conjugating enzyme]-L-cysteine + N(6)-ubiquitinyl-[acceptor protein]-L-lysine.. Its pathway is protein modification; protein ubiquitination. Functionally, E3 ubiquitin-protein ligase which accepts ubiquitin from an E2 ubiquitin-conjugating enzyme in the form of a thioester and transfers it to its substrates. Several substrates have been identified including the BMAL1, ARC, LAMTOR1, RAD23A and RAD23B, MCM7 (which is involved in DNA replication), annexin A1, the PML tumor suppressor, and the cell cycle regulator CDKN1B. Additionally, may function as a cellular quality control ubiquitin ligase by helping the degradation of the cytoplasmic misfolded proteins. Finally, UBE3A also promotes its own degradation in vivo. Plays an important role in the regulation of the circadian clock: involved in the ubiquitination of the core clock component BMAL1, leading to its proteasomal degradation. Acts as a regulator of synaptic development by mediating ubiquitination and degradation of ARC. Required for synaptic remodeling in neurons by mediating ubiquitination and degradation of LAMTOR1, thereby limiting mTORC1 signaling and activity-dependent synaptic remodeling. Synergizes with WBP2 in enhancing PGR activity. The chain is Ubiquitin-protein ligase E3A from Mus musculus (Mouse).